We begin with the raw amino-acid sequence, 497 residues long: NAD(P)H-quinone oxidoreductase chain 4, chloroplastic (497 aa).

A run of 14 helical transmembrane segments spans residues 4-24 (FPWLTLVVILPIAGGSLIFLF), 35-55 (YTVCICLIDLLLTTYAFCYHF), 84-104 (GLSIGPILLTGFITTLATLAA), 111-131 (CKLFYFLMLAMYSGQIGPFSS), 134-154 (ILLFFIMWELELIPVYLLLAM), 167-187 (FILYTAGSSVFLLMATLGIGL), 208-228 (ALEIIVYIGFLIAFAVKSPII), 242-262 (HYSTCMLLAGILLKMGAYGLV), 274-294 (SIFCPWLMILGSIQIIYAASA), 305-325 (IAYSSVSHMGFLIIGIGSISD), 330-350 (GAILQIISHGFIGAALFFLSG), 386-406 (LALPGMSGFFAELIVFWGIIT), 411-431 (FLIMKILITFVTAIGMILTPI), and 463-483 (FISISILIPIIGIGIYPDFIF).

This sequence belongs to the complex I subunit 4 family.

The protein localises to the plastid. It localises to the chloroplast thylakoid membrane. The enzyme catalyses a plastoquinone + NADH + (n+1) H(+)(in) = a plastoquinol + NAD(+) + n H(+)(out). It carries out the reaction a plastoquinone + NADPH + (n+1) H(+)(in) = a plastoquinol + NADP(+) + n H(+)(out). The sequence is that of NAD(P)H-quinone oxidoreductase chain 4, chloroplastic (ndhD) from Lotus japonicus (Lotus corniculatus var. japonicus).